Consider the following 366-residue polypeptide: Methylthioribose-1-phosphate isomerase (366 aa).

Substrate contacts are provided by residues R53 to A55, R90, and Q203. The active-site Proton donor is the D244. N254 to K255 serves as a coordination point for substrate.

Belongs to the eIF-2B alpha/beta/delta subunits family. MtnA subfamily.

It carries out the reaction 5-(methylsulfanyl)-alpha-D-ribose 1-phosphate = 5-(methylsulfanyl)-D-ribulose 1-phosphate. Its pathway is amino-acid biosynthesis; L-methionine biosynthesis via salvage pathway; L-methionine from S-methyl-5-thio-alpha-D-ribose 1-phosphate: step 1/6. Functionally, catalyzes the interconversion of methylthioribose-1-phosphate (MTR-1-P) into methylthioribulose-1-phosphate (MTRu-1-P). This chain is Methylthioribose-1-phosphate isomerase, found in Methylocella silvestris (strain DSM 15510 / CIP 108128 / LMG 27833 / NCIMB 13906 / BL2).